The chain runs to 236 residues: 2-C-methyl-D-erythritol 4-phosphate cytidylyltransferase (236 aa).

It belongs to the IspD/TarI cytidylyltransferase family. IspD subfamily. Homodimer.

The enzyme catalyses 2-C-methyl-D-erythritol 4-phosphate + CTP + H(+) = 4-CDP-2-C-methyl-D-erythritol + diphosphate. It functions in the pathway isoprenoid biosynthesis; isopentenyl diphosphate biosynthesis via DXP pathway; isopentenyl diphosphate from 1-deoxy-D-xylulose 5-phosphate: step 2/6. Catalyzes the formation of 4-diphosphocytidyl-2-C-methyl-D-erythritol from CTP and 2-C-methyl-D-erythritol 4-phosphate (MEP). In Escherichia coli O157:H7, this protein is 2-C-methyl-D-erythritol 4-phosphate cytidylyltransferase.